The chain runs to 220 residues: Protein CREG1 (220 aa).

Residues 1–31 form the signal peptide; it reads MAGLSRGSARALLAALLASTLLALLVSPARG. N-linked (GlcNAc...) asparagine glycosylation is found at asparagine 160, asparagine 193, and asparagine 216.

The protein belongs to the CREG family. Homodimer. Interacts with IGF2R; the interaction is dependent on glycosylation. In terms of processing, N-glycosylated.

It localises to the secreted. May contribute to the transcriptional control of cell growth and differentiation. Antagonizes transcriptional activation and cellular transformation by the adenovirus E1A protein. The transcriptional control activity of cell growth requires interaction with IGF2R. This Homo sapiens (Human) protein is Protein CREG1 (CREG1).